The primary structure comprises 312 residues: Lipoyl synthase (312 aa).

[4Fe-4S] cluster is bound by residues C51, C56, C62, C77, C81, C84, and S290. In terms of domain architecture, Radical SAM core spans 63-280 (WSRKTATYLA…RTIGTSLGLF (218 aa)).

The protein belongs to the radical SAM superfamily. Lipoyl synthase family. It depends on [4Fe-4S] cluster as a cofactor.

The protein resides in the cytoplasm. The enzyme catalyses [[Fe-S] cluster scaffold protein carrying a second [4Fe-4S](2+) cluster] + N(6)-octanoyl-L-lysyl-[protein] + 2 oxidized [2Fe-2S]-[ferredoxin] + 2 S-adenosyl-L-methionine + 4 H(+) = [[Fe-S] cluster scaffold protein] + N(6)-[(R)-dihydrolipoyl]-L-lysyl-[protein] + 4 Fe(3+) + 2 hydrogen sulfide + 2 5'-deoxyadenosine + 2 L-methionine + 2 reduced [2Fe-2S]-[ferredoxin]. Its pathway is protein modification; protein lipoylation via endogenous pathway; protein N(6)-(lipoyl)lysine from octanoyl-[acyl-carrier-protein]: step 2/2. Functionally, catalyzes the radical-mediated insertion of two sulfur atoms into the C-6 and C-8 positions of the octanoyl moiety bound to the lipoyl domains of lipoate-dependent enzymes, thereby converting the octanoylated domains into lipoylated derivatives. The polypeptide is Lipoyl synthase (Chlamydia caviae (strain ATCC VR-813 / DSM 19441 / 03DC25 / GPIC) (Chlamydophila caviae)).